Reading from the N-terminus, the 514-residue chain is Cobyric acid synthase (514 aa).

Residues 263–457 (ALDVAVIRLP…LHGIFDNDPL (195 aa)) enclose the GATase cobBQ-type domain. Residue cysteine 344 is the Nucleophile of the active site. Histidine 449 is an active-site residue.

This sequence belongs to the CobB/CobQ family. CobQ subfamily.

Its pathway is cofactor biosynthesis; adenosylcobalamin biosynthesis. In terms of biological role, catalyzes amidations at positions B, D, E, and G on adenosylcobyrinic A,C-diamide. NH(2) groups are provided by glutamine, and one molecule of ATP is hydrogenolyzed for each amidation. This is Cobyric acid synthase from Desulfitobacterium hafniense (strain DSM 10664 / DCB-2).